A 206-amino-acid chain; its full sequence is Outer-membrane lipoprotein LolB (206 aa).

The N-terminal stretch at Met1–Gly18 is a signal peptide. A lipid anchor (N-palmitoyl cysteine) is attached at Cys19. Cys19 carries the S-diacylglycerol cysteine lipid modification.

It belongs to the LolB family. As to quaternary structure, monomer.

The protein localises to the cell outer membrane. In terms of biological role, plays a critical role in the incorporation of lipoproteins in the outer membrane after they are released by the LolA protein. In Stutzerimonas stutzeri (strain A1501) (Pseudomonas stutzeri), this protein is Outer-membrane lipoprotein LolB.